Here is a 424-residue protein sequence, read N- to C-terminus: Trigger factor (424 aa).

Residues 163 to 248 (GDTVVLDFEG…IHEIKAKELP (86 aa)) enclose the PPIase FKBP-type domain.

The protein belongs to the FKBP-type PPIase family. Tig subfamily.

It is found in the cytoplasm. The catalysed reaction is [protein]-peptidylproline (omega=180) = [protein]-peptidylproline (omega=0). In terms of biological role, involved in protein export. Acts as a chaperone by maintaining the newly synthesized protein in an open conformation. Functions as a peptidyl-prolyl cis-trans isomerase. This Bacillus pumilus (strain SAFR-032) protein is Trigger factor.